A 121-amino-acid polypeptide reads, in one-letter code: Large ribosomal subunit protein bL19 (121 aa).

This sequence belongs to the bacterial ribosomal protein bL19 family.

This protein is located at the 30S-50S ribosomal subunit interface and may play a role in the structure and function of the aminoacyl-tRNA binding site. The chain is Large ribosomal subunit protein bL19 from Bifidobacterium adolescentis (strain ATCC 15703 / DSM 20083 / NCTC 11814 / E194a).